The sequence spans 724 residues: Transcription factor dcp-66 (724 aa).

2 stretches are compositionally biased toward polar residues: residues 1–12 and 56–70; these read MAQVQQVPSSPM and GAST…QLSP. Disordered stretches follow at residues 1–23 and 55–129; these read MAQV…GNGL and NGAS…KRRL. Positions 85–95 are enriched in basic and acidic residues; the sequence is AQEKIKLKDDI. The span at 105 to 119 shows a compositional bias: acidic residues; sequence DDDDMEDEELGDEIN. Residues 186-216 adopt a coiled-coil conformation; it reads EEQLRERLNMRREAENQLREEEAKLLVLRKM. Disordered regions lie at residues 328–361 and 523–590; these read KELS…QITQ and AAPA…QLQQ. Residues 332-358 are compositionally biased toward low complexity; the sequence is AAETNASASASPAVQQSQQAQQPQQAQ. Composition is skewed to polar residues over residues 527–541 and 551–564; these read TSQT…TVSS and IPSS…TQAV. Low complexity predominate over residues 565-590; the sequence is KTSTPIHSTPKSSSSSAKKTAAQLQQ.

Expressed at low levels in excretory cell, pharynx, vulva, and posterior neurons in adults. Strongly expressed in the excretory cell and more weakly in the pharynx in larva. Embryonic expression in the excretory cell.

The protein resides in the nucleus. In terms of biological role, transcription factor which binds to the 5'-CCATACATTA-3' motif found in the promoter region of pgp-12 and activates its expression in the excretory cell. The sequence is that of Transcription factor dcp-66 from Caenorhabditis elegans.